Here is a 258-residue protein sequence, read N- to C-terminus: uncharacterized protein (258 aa).

The signal sequence occupies residues 1–19; it reads MVGILPLCCSGCVPSLCCS. 3 consecutive transmembrane segments (helical) span residues 94–114, 197–217, and 219–239; these read GLLLPCLLGVGSWLLFNNWTG, CLILGIFLFCFVLAVIGLPYI, and PGLSLSVALLWQSLILLSSLV.

Its subcellular location is the membrane. This is an uncharacterized protein from Homo sapiens (Human).